Here is a 211-residue protein sequence, read N- to C-terminus: Envelope protein UL45 homolog (211 aa).

Over 1 to 46 the chain is Intravirion; the sequence is MMSPTPEDDRDLVVVRGRLRMMDNGAEHDRERRSYTAWPHLCCGCT. The helical; Signal-anchor for type II membrane protein transmembrane segment at 47–67 threads the bilayer; sequence IGIILTMFVIATTLLLASLFA. The Virion surface segment spans residues 68-211; it reads FSYMSLESGT…SSILSNAIMK (144 aa). Asn-96 and Asn-133 each carry an N-linked (GlcNAc...) asparagine; by host glycan.

This sequence belongs to the herpesviridae HHV-1 UL45 family.

It is found in the virion membrane. The protein is Envelope protein UL45 homolog (UL45H) of Gallid herpesvirus 2 (strain bc-1) (GaHV-2).